The chain runs to 478 residues: Proline--tRNA ligase (478 aa).

Belongs to the class-II aminoacyl-tRNA synthetase family. ProS type 3 subfamily. In terms of assembly, homodimer.

Its subcellular location is the cytoplasm. The enzyme catalyses tRNA(Pro) + L-proline + ATP = L-prolyl-tRNA(Pro) + AMP + diphosphate. In terms of biological role, catalyzes the attachment of proline to tRNA(Pro) in a two-step reaction: proline is first activated by ATP to form Pro-AMP and then transferred to the acceptor end of tRNA(Pro). The polypeptide is Proline--tRNA ligase (Clostridium botulinum (strain ATCC 19397 / Type A)).